Reading from the N-terminus, the 545-residue chain is Glucose-6-phosphate isomerase (545 aa).

Residue E349 is the Proton donor of the active site. Catalysis depends on residues H380 and K509.

This sequence belongs to the GPI family.

It is found in the cytoplasm. It carries out the reaction alpha-D-glucose 6-phosphate = beta-D-fructose 6-phosphate. The protein operates within carbohydrate biosynthesis; gluconeogenesis. It participates in carbohydrate degradation; glycolysis; D-glyceraldehyde 3-phosphate and glycerone phosphate from D-glucose: step 2/4. Functionally, catalyzes the reversible isomerization of glucose-6-phosphate to fructose-6-phosphate. The protein is Glucose-6-phosphate isomerase of Chelativorans sp. (strain BNC1).